A 624-amino-acid polypeptide reads, in one-letter code: tRNA uridine 5-carboxymethylaminomethyl modification enzyme MnmG (624 aa).

FAD-binding positions include 14-19, valine 126, and serine 181; that span reads GGGHAG. Residue 273–287 participates in NAD(+) binding; sequence GPRYCPSIEDKVVRF. Glutamine 370 is a binding site for FAD.

Belongs to the MnmG family. Homodimer. Heterotetramer of two MnmE and two MnmG subunits. FAD serves as cofactor.

It is found in the cytoplasm. NAD-binding protein involved in the addition of a carboxymethylaminomethyl (cmnm) group at the wobble position (U34) of certain tRNAs, forming tRNA-cmnm(5)s(2)U34. The polypeptide is tRNA uridine 5-carboxymethylaminomethyl modification enzyme MnmG (Geotalea uraniireducens (strain Rf4) (Geobacter uraniireducens)).